Consider the following 251-residue polypeptide: Mediator of RNA polymerase II transcription subunit 7 (251 aa).

Positions 1-38 (MLPGFGAQTVSPFPNPPEYASAYTSDRINNGSAPPPPH) are disordered. The segment covering 22–32 (AYTSDRINNGS) has biased composition (polar residues).

It belongs to the Mediator complex subunit 7 family. Component of the Mediator complex. Interacts with mdt-10 and mdt-21. Interacts with RNA polymerase II.

Its subcellular location is the nucleus. Functionally, component of the Mediator complex, a coactivator involved in the regulated transcription of nearly all RNA polymerase II-dependent genes. Mediator functions as a bridge to convey information from gene-specific regulatory proteins to the basal RNA polymerase II transcription machinery. Mediator is recruited to promoters by direct interactions with regulatory proteins and serves as a scaffold for the assembly of a functional preinitiation complex with RNA polymerase II and the general transcription factors. Required for germ cell development and gonadal growth. This chain is Mediator of RNA polymerase II transcription subunit 7 (let-49), found in Caenorhabditis elegans.